The sequence spans 424 residues: Sulfate adenylyltransferase (424 aa).

Belongs to the sulfate adenylyltransferase family.

The enzyme catalyses sulfate + ATP + H(+) = adenosine 5'-phosphosulfate + diphosphate. The protein operates within sulfur metabolism; hydrogen sulfide biosynthesis; sulfite from sulfate: step 1/3. In Desulfatibacillum aliphaticivorans, this protein is Sulfate adenylyltransferase.